We begin with the raw amino-acid sequence, 404 residues long: 1-deoxy-D-xylulose 5-phosphate reductoisomerase (404 aa).

The NADPH site is built by Thr5, Gly6, Ser7, Ile8, Gly31, Arg32, Asn33, and Asn121. Residue Lys122 coordinates 1-deoxy-D-xylulose 5-phosphate. Residue Glu123 participates in NADPH binding. Position 147 (Asp147) interacts with Mn(2+). 1-deoxy-D-xylulose 5-phosphate is bound by residues Ser148, Glu149, Ser185, and His208. Mn(2+) is bound at residue Glu149. Gly214 provides a ligand contact to NADPH. 1-deoxy-D-xylulose 5-phosphate contacts are provided by Ser221, Asn226, Lys227, and Glu230. A Mn(2+)-binding site is contributed by Glu230.

The protein belongs to the DXR family. The cofactor is Mg(2+). It depends on Mn(2+) as a cofactor.

The catalysed reaction is 2-C-methyl-D-erythritol 4-phosphate + NADP(+) = 1-deoxy-D-xylulose 5-phosphate + NADPH + H(+). The protein operates within isoprenoid biosynthesis; isopentenyl diphosphate biosynthesis via DXP pathway; isopentenyl diphosphate from 1-deoxy-D-xylulose 5-phosphate: step 1/6. Catalyzes the NADPH-dependent rearrangement and reduction of 1-deoxy-D-xylulose-5-phosphate (DXP) to 2-C-methyl-D-erythritol 4-phosphate (MEP). The protein is 1-deoxy-D-xylulose 5-phosphate reductoisomerase of Prochlorococcus marinus subsp. pastoris (strain CCMP1986 / NIES-2087 / MED4).